Consider the following 233-residue polypeptide: Phosphonates import ATP-binding protein PhnC 1 (233 aa).

An ABC transporter domain is found at 2 to 227 (LSVSGLTKRY…PAAALDREDI (226 aa)). ATP is bound at residue 34–41 (GRSGAGKT).

It belongs to the ABC transporter superfamily. Phosphonates importer (TC 3.A.1.9.1) family. In terms of assembly, the complex is composed of two ATP-binding proteins (PhnC), two transmembrane proteins (PhnE) and a solute-binding protein (PhnD).

It localises to the cell membrane. The catalysed reaction is phosphonate(out) + ATP + H2O = phosphonate(in) + ADP + phosphate + H(+). In terms of biological role, part of the ABC transporter complex PhnCDE involved in phosphonates import. Responsible for energy coupling to the transport system. This Natronomonas pharaonis (strain ATCC 35678 / DSM 2160 / CIP 103997 / JCM 8858 / NBRC 14720 / NCIMB 2260 / Gabara) (Halobacterium pharaonis) protein is Phosphonates import ATP-binding protein PhnC 1.